Consider the following 1940-residue polypeptide: Cilia- and flagella-associated protein 74 (1940 aa).

The tract at residues 52-90 is disordered; sequence GSPAVTLRRAKAAAAANGTSSPGIRGSPSPARGPGGRLP. Low complexity predominate over residues 63–90; sequence AAAAANGTSSPGIRGSPSPARGPGGRLP. Residues 100-159 adopt a coiled-coil conformation; it reads ANVEQLKRRLQTVVAEVEGHQQRYDKVLLEANKATDLVHSMEAEIESLYVEAEELARRVP. 5 disordered regions span residues 512-548, 1159-1336, 1373-1418, 1714-1737, and 1894-1940; these read VAGL…QSLT, SPHV…AAAE, PQSQ…AAPP, AGDK…GASK, and PGSR…KKAV. Residues 535-548 show a composition bias toward low complexity; the sequence is SLTQQLAATQQSLT. Residues 1205 to 1220 are compositionally biased toward gly residues; it reads DGGGGGAMANGNGSGG. Positions 1227-1236 are enriched in acidic residues; sequence DGEPEDGEGD. Positions 1260–1271 are enriched in gly residues; that stretch reads GRGGRGGRGGAA. Residues 1272-1282 show a composition bias toward acidic residues; sequence GEDEDEDEDAG. Over residues 1287–1304 the composition is skewed to low complexity; sequence RGKSSSSSKASSGRRSSS. Over residues 1321-1335 the composition is skewed to acidic residues; that stretch reads VPDDDDADAEAEAAA. Over residues 1373–1414 the composition is skewed to low complexity; it reads PQSQNPTPSQSQSGQAPAASAPSDGASGAAAAAETAASSGPA. 2 stretches are compositionally biased toward pro residues: residues 1720–1731 and 1896–1912; these read TPAPGIKPPATP and SRPP…PAPE. Residues 1913–1929 are compositionally biased toward low complexity; sequence PVAASGPGAGAAGVKKL. Residues 1930–1940 show a composition bias toward pro residues; it reads VPPPSPPKKAV.

It belongs to the CFAP74 family. In terms of assembly, part of the PDCP1 complex composed of CFAP46, CFAP54, CFAP74 and CFAP221; the PDCP1 complex binds calmodulin.

It localises to the cytoplasm. Its subcellular location is the cytoskeleton. The protein localises to the cilium axoneme. Functionally, as part of the central apparatus of the cilium axoneme may play a role in cilium movement and thereby cell motility. This Chlamydomonas reinhardtii (Chlamydomonas smithii) protein is Cilia- and flagella-associated protein 74.